A 674-amino-acid chain; its full sequence is Xaa-Pro aminopeptidase 2 (674 aa).

Residues M1–Y22 form the signal peptide. N65 carries N-linked (GlcNAc...) asparagine glycosylation. R116 contacts substrate. 2 N-linked (GlcNAc...) asparagine glycosylation sites follow: N278 and N293. Residue H430 participates in substrate binding. D450, D461, and H524 together coordinate Zn(2+). Substrate is bound by residues H524, H533, and E555. Residues E555 and E569 each contribute to the Zn(2+) site. A lipid anchor (GPI-anchor amidated alanine) is attached at A650. A propeptide spans S651 to C674 (removed in mature form).

It belongs to the peptidase M24B family. In terms of assembly, homotrimer. Zn(2+) serves as cofactor. N-glycosylated. Expressed strongly in lung, liver and heart, and at lower levels in kidney, testis, brain, spleen and skeletal muscle.

Its subcellular location is the cell membrane. It carries out the reaction Release of any N-terminal amino acid, including proline, that is linked to proline, even from a dipeptide or tripeptide.. Its activity is regulated as follows. Inhibited by the chelating agents 1,10-phenanthroline and EDTA. Inhibited by the thiol-containing compounds 2-mercaptoethanol and dithiothreitol. Also inhibited by apstatin, captopril and p-(ch1oromercuri)benzenesulfonic acid. Weakly inhibited by D,L-2-mercaptomethyl-3-guanidinoethylthiopropanoic acid and N-[l-(R,S)-carboxy-(2-phenylethyl)]-Ala-Ala-Phe-p-aminobenzoate. Inhibited by ramiprilat and enalaprilat, in a Mn(2+)-dependent manner. Metal ions have a complex substrate- and concentration-dependent effect on activity. Activity towards Arg-Pro-Pro and Gly-Pro-Hyp is stimulated by Mn(2+) ion concentrations of 10-100 uM and then inhibited at Mn(2+) concentrations of 1-2 mM. Mn(2+) concentrations in excess of 2 mM stimulate activity towards Gly-Pro-Hyp but inhibit activity towards Arg-Pro-Pro. Zn(2+) and Co(2+) ions also inhibit activity towards Arg-Pro-Pro at high concentrations. Activity towards bradykinin is inhibited by Mn(2+) concentrations in excess of 1 mM. Its function is as follows. Membrane-bound metalloprotease which catalyzes the removal of a penultimate prolyl residue from the N-termini of peptides, such as Arg-Pro-Pro. May play a role in the metabolism of the vasodilator bradykinin. The chain is Xaa-Pro aminopeptidase 2 from Rattus norvegicus (Rat).